Reading from the N-terminus, the 122-residue chain is Head fiber dimeric protein (122 aa).

In terms of assembly, homodimer. Interacts with the major capsid protein.

It is found in the virion. In terms of biological role, forms short fibers at the surface of the viral capsid. The chain is Head fiber dimeric protein from Bacteroides intestinalis (Bacteroides phage PhiCrAss001).